Consider the following 421-residue polypeptide: 2',3'-cyclic-nucleotide 3'-phosphodiesterase (421 aa).

A phosphoserine mark is found at serine 6 and serine 9. Tyrosine 110 bears the Phosphotyrosine mark. Residue serine 170 is modified to Phosphoserine. Histidine 251 functions as the Proton acceptor in the catalytic mechanism. Threonine 253 provides a ligand contact to substrate. The Proton donor role is filled by histidine 330. Residue threonine 332 coordinates substrate. Position 359 is a phosphoserine (serine 359). A Cysteine methyl ester modification is found at cysteine 418. Cysteine 418 carries S-farnesyl cysteine lipidation. Positions 419–421 (TII) are cleaved as a propeptide — removed in mature form.

The protein belongs to the 2H phosphoesterase superfamily. CNPase family. Exists as monomers and homodimers.

It is found in the membrane. It localises to the melanosome. The enzyme catalyses a nucleoside 2',3'-cyclic phosphate + H2O = a nucleoside 2'-phosphate + H(+). Catalyzes the formation of 2'-nucleotide products from 2',3'-cyclic substrates. May participate in RNA metabolism in the myelinating cell, CNP is the third most abundant protein in central nervous system myelin. This Pongo abelii (Sumatran orangutan) protein is 2',3'-cyclic-nucleotide 3'-phosphodiesterase.